A 295-amino-acid polypeptide reads, in one-letter code: Autophagy-related protein 37 (295 aa).

In terms of domain architecture, ACB spans 5-103 (VDRVFVHALN…LIDTMHRYAT (99 aa)). Disordered stretches follow at residues 124–162 (NSPSSSLSSPRPNQSTGAGAQQPQQEPEQASDGEGPLKE) and 174–201 (LRSQRQVDLEDDEVDVPTSDRSSGRWQR). Over residues 125 to 153 (SPSSSLSSPRPNQSTGAGAQQPQQEPEQA) the composition is skewed to low complexity. N-linked (GlcNAc...) asparagine glycosylation occurs at Asn136. Residues 244–264 (WLLVKHIFADLVILSVVLLWL) traverse the membrane as a helical segment.

The protein belongs to the ATG37 family.

Its subcellular location is the peroxisome membrane. Its function is as follows. Acyl-CoA binding protein which acts as the peroxisome receptor for pexophagy. Required for both micropexophagy and macropexophagy, but not for the cytoplasm to vacuole transport (Cvt) or autophagy pathways. Required for functional micropexophagic apparatus (MIPA) and relocation of ATG11 to the peroxisome-sequestering arms of the vacuole. Binds palmitoyl-CoA but not oleyl-CoA. This Gibberella zeae (strain ATCC MYA-4620 / CBS 123657 / FGSC 9075 / NRRL 31084 / PH-1) (Wheat head blight fungus) protein is Autophagy-related protein 37.